An 865-amino-acid chain; its full sequence is MKAKMKKHACTYPGCSKAFTRAEHLRRHSLNHETISNSQGYTCQRCMTHFSRADLLSRHLDRHAKKDAEAGGFGKGVLETRKRMRRAEDGSIVLRPPKRPSRHQQKTGPPVGAPLSSSGSVSAGSGRSSRSPDVSLHAAQAPVSPPRSASDPVSVSGVSIDDDGTDPDPMLAPMMPGGPFEPYVEPIPGQFDAADGSWGGFDALGDGMMLDTATDFNLPFAATGNYNWLFDVSSLDDAFHHLELPLGPDLVPFANSHGNYASVNTMELSGAGAENVQDSMLNLDLDIDLNGLPAGFVHDQGPDGSSASVLLQAASFVERGNINGSDPKRDFPDLDWMAGAPPIESTVPLRPQLSEDARRGILTLIAQSPPVDIHGQPLNLDSPLLSLSALQSYSDLFFSRFNTTYPLIHSATFDPNKTEPVFLASILSMGATYSSREAHQLAVGIHDGLRNQLFCHGAFSPQPDELWVLQAMLLIDCFGKMRAGPKQRERAQLFHCVLIKLIRRSTCCSIRADTHSDPGLGGLELEDAWKRAMDAEQRKRLAFQCFMWDTEHSVLFSQSLCMSAFEIRSSLPCSPAAWEAHTAEEWSRHASRDTEHAFLPVLKGYITPGSVSRPRDLNRFSRMVVLHGLMSISADLKRRDQTTLRAETPERVGAWTPRMGRAYDLWKADFDADCLNMKLGPVQVSADETRRFTSLKAAAMALYRAASLALHVEVLDLQIAAGASHILGRVVKQHDRERSRVMLSRWLSGPSPAATTASRHAAALLQDAVLSLHDWDQTDAFHFPWCLYLATLTVWAFHAREGCVPKPTDLSSLIVAMTTSNAADLEGLAGQYDTRPLIRAMAQQLATVRWAVVHDAMKVLLNLGV.

2 consecutive C2H2-type zinc fingers follow at residues 8-32 (HACTYPGCSKAFTRAEHLRRHSLNH) and 41-63 (YTCQRCMTHFSRADLLSRHLDRH). Positions 74–168 (GKGVLETRKR…SIDDDGTDPD (95 aa)) are disordered. The Nuclear localization signal(NLS) signature appears at 77-87 (VLETRKRMRRA). Basic and acidic residues predominate over residues 78–89 (LETRKRMRRAED). The segment covering 96 to 105 (PPKRPSRHQQ) has biased composition (basic residues). Positions 108-132 (GPPVGAPLSSSGSVSAGSGRSSRSP) are enriched in low complexity. The short motif at 285–289 (LDIDL) is the Nuclear export signal (NES) element.

The protein resides in the nucleus. Transcription factor that specifically regulates the expression of the hxn gene cluster that mediates the degradation of nicotinate and related metabolites. In Emericella nidulans (strain FGSC A4 / ATCC 38163 / CBS 112.46 / NRRL 194 / M139) (Aspergillus nidulans), this protein is Nicotinate catabolism cluster-specific transcription factor.